Consider the following 627-residue polypeptide: (-)-alpha-pinene synthase 2, chloroplastic (627 aa).

Residues 1–36 constitute a chloroplast transit peptide; sequence MALVSIAPLASKSCLHKSLSSSAHELKTICRTIPTL. 3 residues coordinate Mg(2+): D378, D382, and D530. The short motif at 378–382 is the DDXXD motif element; it reads DDMYD.

Belongs to the terpene synthase family. Tpsd subfamily. Mg(2+) is required as a cofactor. It depends on Mn(2+) as a cofactor.

The protein resides in the plastid. The protein localises to the chloroplast. It carries out the reaction (2E)-geranyl diphosphate = (1S,5S)-beta-pinene + diphosphate. It catalyses the reaction (2E)-geranyl diphosphate = (1S,5S)-alpha-pinene + diphosphate. It participates in terpene metabolism; oleoresin biosynthesis. Its function is as follows. Terpene synthase (TPS) involved in the biosynthesis of monoterpene natural products included in conifer oleoresin secretions and volatile emissions; these compounds contribute to biotic and abiotic stress defense against herbivores and pathogens. Catalyzes the conversion of (2E)-geranyl diphosphate (GPP) to (1S,5S)-beta-pinene. This chain is (-)-alpha-pinene synthase 2, chloroplastic, found in Picea glauca (White spruce).